Reading from the N-terminus, the 1078-residue chain is Isoleucine--tRNA ligase (1078 aa).

The short motif at 52–62 (PTANGKPALHH) is the 'HIGH' region element. The short motif at 637-641 (KMSKS) is the 'KMSKS' region element. Residue lysine 640 coordinates ATP.

It belongs to the class-I aminoacyl-tRNA synthetase family. IleS type 2 subfamily. In terms of assembly, monomer. Zn(2+) is required as a cofactor.

The protein resides in the cytoplasm. The catalysed reaction is tRNA(Ile) + L-isoleucine + ATP = L-isoleucyl-tRNA(Ile) + AMP + diphosphate. Functionally, catalyzes the attachment of isoleucine to tRNA(Ile). As IleRS can inadvertently accommodate and process structurally similar amino acids such as valine, to avoid such errors it has two additional distinct tRNA(Ile)-dependent editing activities. One activity is designated as 'pretransfer' editing and involves the hydrolysis of activated Val-AMP. The other activity is designated 'posttransfer' editing and involves deacylation of mischarged Val-tRNA(Ile). The chain is Isoleucine--tRNA ligase from Deinococcus radiodurans (strain ATCC 13939 / DSM 20539 / JCM 16871 / CCUG 27074 / LMG 4051 / NBRC 15346 / NCIMB 9279 / VKM B-1422 / R1).